Reading from the N-terminus, the 311-residue chain is Ferrochelatase (311 aa).

Fe cation-binding residues include histidine 179 and glutamate 260.

Belongs to the ferrochelatase family.

It localises to the cytoplasm. The catalysed reaction is heme b + 2 H(+) = protoporphyrin IX + Fe(2+). It participates in porphyrin-containing compound metabolism; protoheme biosynthesis; protoheme from protoporphyrin-IX: step 1/1. Functionally, catalyzes the ferrous insertion into protoporphyrin IX. The protein is Ferrochelatase of Helicobacter hepaticus (strain ATCC 51449 / 3B1).